Here is a 453-residue protein sequence, read N- to C-terminus: HTH-type pyridoxine biosynthesis transcriptional regulator PdxR (453 aa).

Residues 15–83 (TSIPTQLTEQ…RGSGTTINPD (69 aa)) form the HTH gntR-type domain. The H-T-H motif DNA-binding region spans 43 to 62 (SRSLSTQLGVSRGSVVTAYD).

The protein in the C-terminal section; belongs to the class-I pyridoxal-phosphate-dependent aminotransferase family. Requires pyridoxal 5'-phosphate as cofactor.

Functionally, may have a regulatory function in pyridoxine biosynthesis. Is said to also have an aminotransferase activity in valine biosynthesis as a double inactivation of ilvE and pdxR results in an auxotrophic requirement for valine. The protein is HTH-type pyridoxine biosynthesis transcriptional regulator PdxR (pdxR) of Corynebacterium glutamicum (strain ATCC 13032 / DSM 20300 / JCM 1318 / BCRC 11384 / CCUG 27702 / LMG 3730 / NBRC 12168 / NCIMB 10025 / NRRL B-2784 / 534).